A 1015-amino-acid polypeptide reads, in one-letter code: MAVSSPTSSSSSSESLPLPSSNFASLPIMAMKRRIIDKILENRVTLIVGEPGCGKSSQVPQFLLEANMAPILCTQPRRFAVVAVAKMVAKSRNSDLGGEIGYHIGHSKILTEGSKILFKTAGVLLDEMLDKGLNALKYKVIILDEVHERSVESDLVLVCVKQFLMKNNDLRVVLMSATADITRYRDYFKELGRGERVEVVAIPSPDQRTIFQRRVLYLEQVAGLLGVSSDLSAYCPGPSPSSADTEIKPELQNLIHDLILYIHEKEPDIEKSILVFLPTYYSLEQQYHQLEPFFASFEVHILHRSIDTEQALAAMKICRSRRKVILATNIAESSVTIPKVAYVIDSCRSLQVFWDPSRKRDAVQLVWVSRSQAEQRRGRTGRTCDGEVYRLVPSAFFNKLEEHEPPSILKLSLRQQVLHICCTESRAINDANALLAKAMDPPDPDVVDDALRMLLSIQALRKSPRGRYEPTFYGRLLASFPLSFDASILVVKFGEMGMLRQGILLGVLMDTLPLPIHHPFGDDSLFLEYVDHYFGGSKTISGGRREMVLMANFCAFQFWQRVFKDKHRLENLKQLLSKEKDKDLKLMFPEIEKEWCDFHNIAQSSFYHVSELYEDTLSSFHRFRPQFISSSDSQPTYYNPYEFDHTCYIECQPSEDKYLHSEDVDNNQPPPEVRKCVSVPFVPPNAFQANAIAENMASIIKEIRTQCTPSESDNGHGALEPEDYVEYGEAPVCVYFLNGYCNRGGQCTFTHTLQSTRPACKFFASSQGCRNGESCLFSHAMRRRTTSYLPPPQCLPEEDGSSTSPLLDLFPTSSEGCILVFDDSDMHFTSSIANRYPSWRILSTSSSSETLFCDSSLADTRIFWGLNHPYQTIISKAGRENPIPWNEVKCVLWFLNPDSYADTPEKQKTILQNFFEHMAIRLLGDKLYKIRVVLTMNNVRFSLLQVEKLARESFFFLGESFPHDSESFGAFQDTLTIQKPMLVSRPISYVFNLHPPSDIQFGNYTSLLRKSLHNK.

Residues 36 to 197 (IDKILENRVT…FKELGRGERV (162 aa)) form the Helicase ATP-binding domain. 49–56 (GEPGCGKS) is an ATP binding site. The DEVH box motif lies at 144-147 (DEVH). Residues 254 to 419 (LIHDLILYIH…KLSLRQQVLH (166 aa)) form the Helicase C-terminal domain. C3H1-type zinc fingers lie at residues 727 to 753 (YGEA…THTL) and 754 to 782 (QSTR…HAMR).

Belongs to the DExH box helicase family.

The catalysed reaction is ATP + H2O = ADP + phosphate + H(+). The chain is DExH-box ATP-dependent RNA helicase DExH8 from Arabidopsis thaliana (Mouse-ear cress).